The chain runs to 325 residues: Elongation factor P--(R)-beta-lysine ligase (325 aa).

Residue 76-78 (SPE) participates in substrate binding. ATP contacts are provided by residues 100–102 (RNE) and N109. Y118 lines the substrate pocket. 244 to 245 (EL) serves as a coordination point for ATP. E251 lines the substrate pocket. An ATP-binding site is contributed by G300.

This sequence belongs to the class-II aminoacyl-tRNA synthetase family. EpmA subfamily. Homodimer.

It catalyses the reaction D-beta-lysine + L-lysyl-[protein] + ATP = N(6)-((3R)-3,6-diaminohexanoyl)-L-lysyl-[protein] + AMP + diphosphate + H(+). Its function is as follows. With EpmB is involved in the beta-lysylation step of the post-translational modification of translation elongation factor P (EF-P). Catalyzes the ATP-dependent activation of (R)-beta-lysine produced by EpmB, forming a lysyl-adenylate, from which the beta-lysyl moiety is then transferred to the epsilon-amino group of a conserved specific lysine residue in EF-P. This chain is Elongation factor P--(R)-beta-lysine ligase, found in Klebsiella pneumoniae subsp. pneumoniae (strain ATCC 700721 / MGH 78578).